The chain runs to 67 residues: Bowman-Birk type proteinase inhibitor 1 (67 aa).

7 disulfides stabilise this stretch: Cys-5-Cys-59, Cys-6-Cys-21, Cys-9-Cys-55, Cys-11-Cys-19, Cys-29-Cys-36, Cys-33-Cys-48, and Cys-38-Cys-46.

It belongs to the Bowman-Birk serine protease inhibitor family. In terms of assembly, monomer. Although dimerization may occur in solution. As to expression, seed.

In terms of biological role, inhibits trypsin but not chymotrypsin. The inhibitor consists of 2 domains and has 2 sites of interaction with trypsin. This Dioclea glabra protein is Bowman-Birk type proteinase inhibitor 1.